A 1066-amino-acid chain; its full sequence is MAPAPSAAGVPATVPAKAVKGAAGAAAKAGAAAEKKEASAETDALLSGDKDAAQELTNLVKIEGPAALANLGIEAVILKGLGDKKNATAREGACTLLANLCEQGVGHEVEPFIFENVLNSLVEAMGDKEKAVQKASLETLKAFVRVMSPWAAQQVLKVVLHQARTAGKWQVKTGCVALLEEMVTACPERMAALMPEIIPVMTEVIWDTKTDVQKASRAALTKLCALISNKDIERFIPALINSLIHPVEEVPKTIQLLSATTFVQEVDSATLALMVPLLSRGLNERPTATKRKVAVIIDNMTKLVDNERTVRPFLGKLLPGLIKIESTLADPEARSVVQRAIKTLREVGKVTGDGSDVKPLEDVDIKATQEQVNKALGEQSLQAQADLSSYLAVLVANLANARNFELTEWESTLIPYITLIKGSKPEQAKAVAKSLLTALAKSTGDTVEIFDDEEEGEDLCNCQFSLAYGAKILLNTATLRLKRGHKYGLCGRNGSGKSTLMRAITNGQVEGFPSPDEVRTWYVEHDLDGSEGLMTVLEFILADERLSMTRDEAVATLHEVGFDDARQNSPIAGLSGGWKMKVALARAILFKADILLLDEPTNHLDVVNVKWITDYLVNLKTATAIIVSHDSKFLNDVCTDILHLNRFKIKRYPGNLDAFVKRVPEARAYAELNTGEDYSFKLPDPPLLDGVKTKEKSLIKMKDVVFQYPGTPAPQLRGVSIQLSLASRVAILGPNGSGKSTLVKLIVGDTEPGSGEMWKHPNLVIGYVAQHAFHHIDQHLDKTPLDYMLWRYQTGEDLEEHMKANRALTAEEEAAKKQGEVFVIEGVKRLFDEIVGRKKLKNSFQYEVSFKNMSSADNQWVPRDDLINRGLERAVLAFDSKEAQRLGMNRPLVRKEIENHFEDFGLEREFTSHNTMRGLSGGQKVKVVLAAATWRRPHIIILDEPTNFLDRESLAALIKAIESFQGGVGIITHSKEFSEGTCKEIWAMNDGVLVASGHDWTESNSKGTKLEKKEEDDEYTDAMGNVHKKEKKAKKESASDRRKAKKDRMARKKAGTYDSADELEDL.

HEAT repeat units follow at residues Phe-112 to Pro-149, Ala-151 to Glu-188, Ala-192 to Asn-229, Asp-231 to Ser-268, Ala-269 to Asn-306, and Pro-312 to Asp-353. Thr-418 is a binding site for ADP. ABC transporter domains follow at residues Glu-454–Leu-672 and Ile-699–Glu-1015. Residues Asn-735, Glu-944, Asn-947, and His-973 each coordinate ADP. Positions Gly-997–Leu-1066 are disordered. Residues Arg-1042–Ala-1054 show a composition bias toward basic residues.

The protein belongs to the ABC transporter superfamily. ABCF family. EF3 subfamily.

The protein resides in the cytoplasm. It localises to the cytosol. It carries out the reaction ATP + H2O = ADP + phosphate + H(+). It participates in protein biosynthesis; polypeptide chain elongation. Functionally, ribosome-dependent ATPase that functions in cytoplasmic translation elongation. Required for the ATP-dependent release of deacylated tRNA from the ribosomal E-site during protein biosynthesis. Stimulates the eEF1A-dependent binding of aminoacyl-tRNA to the ribosomal A-site, which has reduced affinity for tRNA as long as the E-site is occupied. Assists translation termination by stimulating the release of nascent protein from the ribosome by release factors. This Mycosarcoma maydis (Corn smut fungus) protein is Elongation factor 3.